A 401-amino-acid chain; its full sequence is Imidazolonepropionase (401 aa).

Fe(3+)-binding residues include His66 and His68. Residues His66 and His68 each contribute to the Zn(2+) site. 3 residues coordinate 4-imidazolone-5-propanoate: Arg75, Tyr138, and His171. Tyr138 provides a ligand contact to N-formimidoyl-L-glutamate. His236 serves as a coordination point for Fe(3+). His236 is a Zn(2+) binding site. Position 239 (Gln239) interacts with 4-imidazolone-5-propanoate. Position 311 (Asp311) interacts with Fe(3+). Asp311 serves as a coordination point for Zn(2+). Residues Asn313 and Gly315 each contribute to the N-formimidoyl-L-glutamate site. Thr316 contributes to the 4-imidazolone-5-propanoate binding site.

It belongs to the metallo-dependent hydrolases superfamily. HutI family. It depends on Zn(2+) as a cofactor. Fe(3+) serves as cofactor.

The protein localises to the cytoplasm. It catalyses the reaction 4-imidazolone-5-propanoate + H2O = N-formimidoyl-L-glutamate. The protein operates within amino-acid degradation; L-histidine degradation into L-glutamate; N-formimidoyl-L-glutamate from L-histidine: step 3/3. Catalyzes the hydrolytic cleavage of the carbon-nitrogen bond in imidazolone-5-propanoate to yield N-formimidoyl-L-glutamate. It is the third step in the universal histidine degradation pathway. In Acinetobacter baumannii (strain ACICU), this protein is Imidazolonepropionase.